A 364-amino-acid polypeptide reads, in one-letter code: tRNA 2-selenouridine synthase (364 aa).

Residues 14 to 137 (LIADTPIIDV…LRQTTIQATI (124 aa)) enclose the Rhodanese domain. The active-site S-selanylcysteine intermediate is the cysteine 97.

This sequence belongs to the SelU family. As to quaternary structure, monomer.

The enzyme catalyses 5-methylaminomethyl-2-thiouridine(34) in tRNA + selenophosphate + (2E)-geranyl diphosphate + H2O + H(+) = 5-methylaminomethyl-2-selenouridine(34) in tRNA + (2E)-thiogeraniol + phosphate + diphosphate. It catalyses the reaction 5-methylaminomethyl-2-thiouridine(34) in tRNA + (2E)-geranyl diphosphate = 5-methylaminomethyl-S-(2E)-geranyl-thiouridine(34) in tRNA + diphosphate. The catalysed reaction is 5-methylaminomethyl-S-(2E)-geranyl-thiouridine(34) in tRNA + selenophosphate + H(+) = 5-methylaminomethyl-2-(Se-phospho)selenouridine(34) in tRNA + (2E)-thiogeraniol. It carries out the reaction 5-methylaminomethyl-2-(Se-phospho)selenouridine(34) in tRNA + H2O = 5-methylaminomethyl-2-selenouridine(34) in tRNA + phosphate. In terms of biological role, involved in the post-transcriptional modification of the uridine at the wobble position (U34) of tRNA(Lys), tRNA(Glu) and tRNA(Gln). Catalyzes the conversion of 2-thiouridine (S2U-RNA) to 2-selenouridine (Se2U-RNA). Acts in a two-step process involving geranylation of 2-thiouridine (S2U) to S-geranyl-2-thiouridine (geS2U) and subsequent selenation of the latter derivative to 2-selenouridine (Se2U) in the tRNA chain. The polypeptide is tRNA 2-selenouridine synthase (Escherichia coli O139:H28 (strain E24377A / ETEC)).